The following is a 344-amino-acid chain: Cysteine proteinase 5 (344 aa).

The signal sequence occupies residues 1–17 (MKVLSFLCVLLVSVATA). A propeptide spans 18-111 (KQQFSELQYR…TQEEKVFTTS (94 aa)) (activation peptide). Intrachain disulfides connect C133/C174, C167/C207, and C265/C333. Residue C136 is part of the active site. The active site involves H272. A glycan (N-linked (GlcNAc...) asparagine) is linked at N297. N311 is a catalytic residue.

This sequence belongs to the peptidase C1 family. In terms of processing, glycosylated; contains GlcNAc-alpha-1-P-Ser residues.

The protein localises to the lysosome. In Dictyostelium discoideum (Social amoeba), this protein is Cysteine proteinase 5 (cprE).